A 421-amino-acid polypeptide reads, in one-letter code: Serine--tRNA ligase (421 aa).

Position 229–231 (229–231) interacts with L-serine; the sequence is TAE. 260 to 262 contacts ATP; that stretch reads RAE. Glutamate 283 contributes to the L-serine binding site. An ATP-binding site is contributed by 347-350; that stretch reads EISS. Serine 383 serves as a coordination point for L-serine.

The protein belongs to the class-II aminoacyl-tRNA synthetase family. Type-1 seryl-tRNA synthetase subfamily. In terms of assembly, homodimer. The tRNA molecule binds across the dimer.

The protein resides in the cytoplasm. It carries out the reaction tRNA(Ser) + L-serine + ATP = L-seryl-tRNA(Ser) + AMP + diphosphate + H(+). The enzyme catalyses tRNA(Sec) + L-serine + ATP = L-seryl-tRNA(Sec) + AMP + diphosphate + H(+). It participates in aminoacyl-tRNA biosynthesis; selenocysteinyl-tRNA(Sec) biosynthesis; L-seryl-tRNA(Sec) from L-serine and tRNA(Sec): step 1/1. Its function is as follows. Catalyzes the attachment of serine to tRNA(Ser). Is also able to aminoacylate tRNA(Sec) with serine, to form the misacylated tRNA L-seryl-tRNA(Sec), which will be further converted into selenocysteinyl-tRNA(Sec). The sequence is that of Serine--tRNA ligase from Desulfitobacterium hafniense (strain DSM 10664 / DCB-2).